The sequence spans 218 residues: Transmembrane gamma-carboxyglutamic acid protein 1 (218 aa).

The propeptide occupies 1–20 (MGRVFLTGEKANSILKRYPR). Residues 21–66 (ANGFFEEIRQGNIERECKEEFCTFEEAREAFENNEKTKEFWSTYTK) enclose the Gla domain. Residues 21 to 83 (ANGFFEEIRQ…RGSDWFQFYL (63 aa)) are Extracellular-facing. A disulfide bond links Cys-37 and Cys-42. Residues 84 to 106 (TFPLIFGLFIILLVIFLIWRCFL) form a helical membrane-spanning segment. Topologically, residues 107–218 (RNKTRRQTVT…PMVPVVTTIK (112 aa)) are cytoplasmic. Positions 161–195 (TRLSNCDPPPTYEEATGQVNLQRSETEPHLDPPPE) are disordered.

Post-translationally, gla residues are produced after subsequent post-translational modifications of glutamate by a vitamin K-dependent gamma-carboxylase. In terms of tissue distribution, highly expressed in the spinal cord.

The protein resides in the membrane. This chain is Transmembrane gamma-carboxyglutamic acid protein 1 (PRRG1), found in Homo sapiens (Human).